The primary structure comprises 449 residues: Methylenetetrahydrofolate--tRNA-(uracil-5-)-methyltransferase TrmFO (449 aa).

Residue 9-14 (GGGIAG) participates in FAD binding.

The protein belongs to the MnmG family. TrmFO subfamily. The cofactor is FAD.

It localises to the cytoplasm. It catalyses the reaction uridine(54) in tRNA + (6R)-5,10-methylene-5,6,7,8-tetrahydrofolate + NADH + H(+) = 5-methyluridine(54) in tRNA + (6S)-5,6,7,8-tetrahydrofolate + NAD(+). The catalysed reaction is uridine(54) in tRNA + (6R)-5,10-methylene-5,6,7,8-tetrahydrofolate + NADPH + H(+) = 5-methyluridine(54) in tRNA + (6S)-5,6,7,8-tetrahydrofolate + NADP(+). Functionally, catalyzes the folate-dependent formation of 5-methyl-uridine at position 54 (M-5-U54) in all tRNAs. The protein is Methylenetetrahydrofolate--tRNA-(uracil-5-)-methyltransferase TrmFO of Gloeobacter violaceus (strain ATCC 29082 / PCC 7421).